A 146-amino-acid polypeptide reads, in one-letter code: uncharacterized protein (146 aa).

The chain crosses the membrane as a helical span at residues 7-27 (FVLSITIVLVILIIIAFIWYN).

Belongs to the asfivirus E146L family.

Its subcellular location is the host membrane. The protein resides in the virion. This is an uncharacterized protein from Ornithodoros (relapsing fever ticks).